The primary structure comprises 170 residues: Phosphopantetheine adenylyltransferase (170 aa).

Position 14 (Thr-14) interacts with substrate. Residues 14–15 (TF) and His-22 each bind ATP. The substrate site is built by Lys-46, Leu-78, and Arg-92. ATP contacts are provided by residues 93–95 (GLR), Glu-103, and 128–134 (WLYISST).

The protein belongs to the bacterial CoaD family. Homohexamer. Mg(2+) serves as cofactor.

The protein resides in the cytoplasm. The catalysed reaction is (R)-4'-phosphopantetheine + ATP + H(+) = 3'-dephospho-CoA + diphosphate. Its pathway is cofactor biosynthesis; coenzyme A biosynthesis; CoA from (R)-pantothenate: step 4/5. Functionally, reversibly transfers an adenylyl group from ATP to 4'-phosphopantetheine, yielding dephospho-CoA (dPCoA) and pyrophosphate. The sequence is that of Phosphopantetheine adenylyltransferase from Oleidesulfovibrio alaskensis (strain ATCC BAA-1058 / DSM 17464 / G20) (Desulfovibrio alaskensis).